The following is an 884-amino-acid chain: DNA mismatch repair protein MutS (884 aa).

643-650 contributes to the ATP binding site; the sequence is GPNMGGKS.

It belongs to the DNA mismatch repair MutS family.

Its function is as follows. This protein is involved in the repair of mismatches in DNA. It is possible that it carries out the mismatch recognition step. This protein has a weak ATPase activity. In Methylobacillus flagellatus (strain ATCC 51484 / DSM 6875 / VKM B-1610 / KT), this protein is DNA mismatch repair protein MutS.